We begin with the raw amino-acid sequence, 147 residues long: Leghemoglobin 8 (147 aa).

The Globin domain maps to 2-147 (GFTEKQESLV…LAASIKKSMS (146 aa)). Nitrated tyrosine occurs at positions 25 and 30. Ser-45 is a heme b binding site. Ser-45 is subject to Phosphoserine. His-62 is an O2 binding site. Positions 65, 94, and 97 each coordinate heme b. The residue at position 135 (Tyr-135) is a Nitrated tyrosine.

The protein belongs to the plant globin family. As to quaternary structure, monomer. Interacts with CAS31 in the cytoplasm; this interaction leads to its protection from denaturation under thermal and drought stresses. In terms of processing, nitrated in effective nodules and particularly in hypoxic conditions; this mechanism may play a protective role in the symbiosis by buffering toxic peroxynitrite NO(2)(-). Nitration level decrease during nodule senescence. Post-translationally, phosphorylation at Ser-45 disrupts the molecular environment of its porphyrin ring oxygen binding pocket, thus leading to a reduced oxygen consumption and to the delivery of oxygen O(2) to symbiosomes. Root nodules.

It is found in the cytoplasm. It localises to the nucleus. Its function is as follows. Leghemoglobin that reversibly binds oxygen O(2) through a pentacoordinated heme iron. In root nodules, facilitates the diffusion of oxygen to the bacteroids while preventing the bacterial nitrogenase from being inactivated by buffering dioxygen, nitric oxide and carbon monoxide, and promoting the formation of reactive oxygen species (ROS, e.g. H(2)O(2)). This role is essential for symbiotic nitrogen fixation (SNF). This is Leghemoglobin 8 from Medicago truncatula (Barrel medic).